The primary structure comprises 289 residues: CBY1-interacting BAR domain-containing protein 1 (289 aa).

The transit peptide at 1–47 (MMRRTLENRNAQTKQLQTAVSNVEKHFGELCQIFAAYVRKTARLRDK) directs the protein to the mitochondrion. Residues 10–220 (NAQTKQLQTA…NIDEDEDLEV (211 aa)) form a BAR-like region. Residues 107–178 (KMKRDDLKAT…INNFERQKMK (72 aa)) are a coiled coil. The interval 265 to 289 (LRKDQQAEDDEDDELDVTEEENFLK) is disordered. Positions 271-289 (AEDDEDDELDVTEEENFLK) are enriched in acidic residues.

It belongs to the CIBAR family. In terms of assembly, homodimer (via BAR-like domain). Heterodimer with FAM92B (via BAR-like domains). Interacts (via BAR-like domain) with CBY1; this interaction is required for targeting FAM92A to centriole and cilium basal body. Interacts (via BAR-like domain) with CBY3; both proteins form a ninefold symmetric structure at the flagellar base; are recruited to the annulus in a mutually dependent manner and regulate annulus positionning.

It localises to the cytoplasm. The protein localises to the cytoskeleton. The protein resides in the microtubule organizing center. Its subcellular location is the centrosome. It is found in the centriole. It localises to the cilium basal body. The protein localises to the cell projection. The protein resides in the cilium. Its subcellular location is the nucleus. It is found in the mitochondrion inner membrane. It localises to the flagellum. Its function is as follows. Plays a critical role in regulating mitochondrial ultrastructure and function by maintaining the integrity of mitochondrial morphology, particularly the organization of cristae. Preferentially binds to negatively charged phospholipids like cardiolipin and phosphatidylinositol 4,5-bisphosphate enhancing its interaction with mitochondrial membranes. Induces membrane curvature and tubulation, which are critical for maintaining mitochondrial ultrastructure and the organization of cristae. Plays a crucial role in ciliogenesis. May play a role in limb development through its role in ciliogenesis. Plays a key role in the correct positioning of the annulus, a septin-based ring structure in the sperm flagellum, serving both as a physical barrier and a membrane diffusion barrier that separates the midpiece (MP) from the principal piece (PP). This positioning is essential for proper sperm motility and function. Interacts with CBY3 to form a complex which localizes to the curved membrane region of the flagellar pocket. By doing so, may provide stability and rigidity to the periannular membrane to prevent membrane deformation. This function is crucial for halting annulus migration at the proximal end of the fibrous sheath-containing PP. In Homo sapiens (Human), this protein is CBY1-interacting BAR domain-containing protein 1.